Consider the following 128-residue polypeptide: Glycine cleavage system H protein (128 aa).

The 83-residue stretch at 24–106 (VYTVGITEHA…YAEGFLFQIK (83 aa)) folds into the Lipoyl-binding domain. Position 65 is an N6-lipoyllysine (K65).

This sequence belongs to the GcvH family. In terms of assembly, the glycine cleavage system is composed of four proteins: P, T, L and H. It depends on (R)-lipoate as a cofactor.

In terms of biological role, the glycine cleavage system catalyzes the degradation of glycine. The H protein shuttles the methylamine group of glycine from the P protein to the T protein. The sequence is that of Glycine cleavage system H protein from Serratia proteamaculans (strain 568).